The sequence spans 1379 residues: DNA-directed RNA polymerase subunit beta (1379 aa).

Belongs to the RNA polymerase beta chain family. The RNAP catalytic core consists of 2 alpha, 1 beta, 1 beta' and 1 omega subunit. When a sigma factor is associated with the core the holoenzyme is formed, which can initiate transcription.

The enzyme catalyses RNA(n) + a ribonucleoside 5'-triphosphate = RNA(n+1) + diphosphate. DNA-dependent RNA polymerase catalyzes the transcription of DNA into RNA using the four ribonucleoside triphosphates as substrates. This Allorhizobium ampelinum (strain ATCC BAA-846 / DSM 112012 / S4) (Agrobacterium vitis (strain S4)) protein is DNA-directed RNA polymerase subunit beta.